Consider the following 417-residue polypeptide: NADH-quinone oxidoreductase subunit D (417 aa).

It belongs to the complex I 49 kDa subunit family. NDH-1 is composed of 14 different subunits. Subunits NuoB, C, D, E, F, and G constitute the peripheral sector of the complex.

Its subcellular location is the cell inner membrane. It catalyses the reaction a quinone + NADH + 5 H(+)(in) = a quinol + NAD(+) + 4 H(+)(out). NDH-1 shuttles electrons from NADH, via FMN and iron-sulfur (Fe-S) centers, to quinones in the respiratory chain. The immediate electron acceptor for the enzyme in this species is believed to be ubiquinone. Couples the redox reaction to proton translocation (for every two electrons transferred, four hydrogen ions are translocated across the cytoplasmic membrane), and thus conserves the redox energy in a proton gradient. This chain is NADH-quinone oxidoreductase subunit D, found in Polynucleobacter necessarius subsp. necessarius (strain STIR1).